The following is a 158-amino-acid chain: Ribosome maturation factor RimP (158 aa).

The protein belongs to the RimP family.

It is found in the cytoplasm. Functionally, required for maturation of 30S ribosomal subunits. The sequence is that of Ribosome maturation factor RimP from Pseudomonas savastanoi pv. phaseolicola (strain 1448A / Race 6) (Pseudomonas syringae pv. phaseolicola (strain 1448A / Race 6)).